A 207-amino-acid chain; its full sequence is Large ribosomal subunit protein uL4 (207 aa).

The segment at A50–G76 is disordered.

It belongs to the universal ribosomal protein uL4 family. In terms of assembly, part of the 50S ribosomal subunit.

Its function is as follows. One of the primary rRNA binding proteins, this protein initially binds near the 5'-end of the 23S rRNA. It is important during the early stages of 50S assembly. It makes multiple contacts with different domains of the 23S rRNA in the assembled 50S subunit and ribosome. Functionally, forms part of the polypeptide exit tunnel. In Staphylococcus aureus (strain MRSA252), this protein is Large ribosomal subunit protein uL4.